Reading from the N-terminus, the 328-residue chain is Alanine racemase (328 aa).

Residue Lys-33 is the Proton acceptor; specific for D-alanine of the active site. Lys-33 bears the N6-(pyridoxal phosphate)lysine mark. Arg-118 contacts substrate. Tyr-237 serves as the catalytic Proton acceptor; specific for L-alanine. Residue Met-283 coordinates substrate.

This sequence belongs to the alanine racemase family. The cofactor is pyridoxal 5'-phosphate.

It catalyses the reaction L-alanine = D-alanine. It functions in the pathway amino-acid biosynthesis; D-alanine biosynthesis; D-alanine from L-alanine: step 1/1. Functionally, catalyzes the interconversion of L-alanine and D-alanine. May also act on other amino acids. The sequence is that of Alanine racemase (alr) from Campylobacter jejuni subsp. jejuni serotype O:6 (strain 81116 / NCTC 11828).